The chain runs to 509 residues: 2,3-bisphosphoglycerate-independent phosphoglycerate mutase (509 aa).

Aspartate 11 provides a ligand contact to Mn(2+). Tyrosine 35 carries the post-translational modification Phosphotyrosine. Residue serine 61 coordinates Mn(2+). Serine 61 functions as the Phosphoserine intermediate in the catalytic mechanism. Substrate-binding positions include histidine 122, 152-153 (RD), arginine 184, arginine 190, 260-263 (RPDR), and lysine 335. Mn(2+)-binding residues include aspartate 402, histidine 406, aspartate 443, histidine 444, and histidine 461.

The protein belongs to the BPG-independent phosphoglycerate mutase family. In terms of assembly, monomer. The cofactor is Mn(2+).

The enzyme catalyses (2R)-2-phosphoglycerate = (2R)-3-phosphoglycerate. It functions in the pathway carbohydrate degradation; glycolysis; pyruvate from D-glyceraldehyde 3-phosphate: step 3/5. Functionally, essential for rapid growth and for sporulation. Catalyzes the interconversion of 2-phosphoglycerate and 3-phosphoglycerate. This Bacillus thuringiensis (strain Al Hakam) protein is 2,3-bisphosphoglycerate-independent phosphoglycerate mutase.